Reading from the N-terminus, the 221-residue chain is Ribosomal RNA large subunit methyltransferase E (221 aa).

5 residues coordinate S-adenosyl-L-methionine: Gly-60, Trp-62, Asp-89, Asp-105, and Asp-134. Lys-174 serves as the catalytic Proton acceptor. The segment at 199–221 is disordered; sequence KPKASRDKSSETFLLGRQLKHPG.

It belongs to the class I-like SAM-binding methyltransferase superfamily. RNA methyltransferase RlmE family.

The protein localises to the cytoplasm. It carries out the reaction uridine(2552) in 23S rRNA + S-adenosyl-L-methionine = 2'-O-methyluridine(2552) in 23S rRNA + S-adenosyl-L-homocysteine + H(+). Its function is as follows. Specifically methylates the uridine in position 2552 of 23S rRNA at the 2'-O position of the ribose in the fully assembled 50S ribosomal subunit. The chain is Ribosomal RNA large subunit methyltransferase E from Ralstonia pickettii (strain 12J).